We begin with the raw amino-acid sequence, 149 residues long: Calmodulin-3 (149 aa).

A2 carries the post-translational modification N-acetylalanine. EF-hand domains lie at 8-43 (DQIA…LGQN), 44-79 (PTEA…KMKD), 81-116 (DSEE…LGEK), and 117-149 (LTDE…MMAK). The Ca(2+) site is built by D21, D23, D25, C27, E32, D57, D59, N61, T63, E68, D94, D96, N98, and E105. The residue at position 116 (K116) is an N6,N6,N6-trimethyllysine. Ca(2+) is bound by residues D130, D132, D134, Q136, and E141.

Belongs to the calmodulin family.

Calmodulin mediates the control of a large number of enzymes, ion channels and other proteins by Ca(2+). Among the enzymes to be stimulated by the calmodulin-Ca(2+) complex are a number of protein kinases and phosphatases. The polypeptide is Calmodulin-3 (CAM3) (Oryza sativa subsp. indica (Rice)).